The following is a 1747-amino-acid chain: Retroelement silencing factor 1 (1747 aa).

Lysine 216 is covalently cross-linked (Glycyl lysine isopeptide (Lys-Gly) (interchain with G-Cter in SUMO2)). Phosphoserine is present on serine 221. Polar residues predominate over residues 261–272 (TSAVPSQQYATQ). A disordered region spans residues 261–280 (TSAVPSQQYATQTDKRPPPP). Lysine 707 participates in a covalent cross-link: Glycyl lysine isopeptide (Lys-Gly) (interchain with G-Cter in SUMO2). Disordered regions lie at residues 833 to 856 (PLTQKEKQNESTNGNSEVTPNVNQ), 923 to 956 (PQKPSLPNQQGIGSREPEKQLDNTTENKDFGFQK), and 1073 to 1101 (EGSVGQQTTYQTSEDQTADKTSSDSKDPA). Positions 842 to 856 (ESTNGNSEVTPNVNQ) are enriched in polar residues. Over residues 937-956 (REPEKQLDNTTENKDFGFQK) the composition is skewed to basic and acidic residues. The segment covering 1073–1087 (EGSVGQQTTYQTSED) has biased composition (polar residues). Residues 1089 to 1101 (TADKTSSDSKDPA) show a composition bias toward basic and acidic residues. Lysine 1136 participates in a covalent cross-link: Glycyl lysine isopeptide (Lys-Gly) (interchain with G-Cter in SUMO2). Serine 1145 carries the phosphoserine modification. The disordered stretch occupies residues 1200–1274 (EEKQKEQCSP…KSLPRTEQEL (75 aa)). The segment covering 1217 to 1226 (QGERTSDRDV) has biased composition (basic and acidic residues). Threonine 1240 bears the Phosphothreonine mark. A compositionally biased stretch (basic and acidic residues) spans 1242-1261 (PDGKSHFPELQDDSRKDTPK). Serine 1358 is subject to Phosphoserine. Residues lysine 1528 and lysine 1636 each participate in a glycyl lysine isopeptide (Lys-Gly) (interchain with G-Cter in SUMO2) cross-link. The disordered stretch occupies residues 1686 to 1716 (KRTQKDSQERDNVNSRLSKRSFSADGFEMLQ). Positions 1689–1698 (QKDSQERDNV) are enriched in basic and acidic residues. A Phosphoserine modification is found at serine 1708. Residue lysine 1723 forms a Glycyl lysine isopeptide (Lys-Gly) (interchain with G-Cter in SUMO2) linkage. Position 1740 is a phosphoserine (serine 1740).

As to quaternary structure, interacts with SETDB1.

Its subcellular location is the nucleus. In terms of biological role, plays a role in the regulation of imprinted gene expression, regulates repressive epigenetic modifications associated with SETDB1. Required for the recruitment or accumulation of SETDB1 to the endogenous retroviruses (ERVs) and maintenance of repressive chromatin configuration, contributing to a subset of the SETDB1-dependent ERV silencing in embryonic stem cells. The protein is Retroelement silencing factor 1 of Homo sapiens (Human).